A 154-amino-acid chain; its full sequence is Transcriptional repressor NrdR (154 aa).

Residues 3–34 fold into a zinc finger; the sequence is CPFCGNVDTQVKDSRPAEDNVAIRRRRFCPAC. The region spanning 49 to 139 is the ATP-cone domain; sequence LVVVKSSGRR…VYKNFQAADD (91 aa).

The protein belongs to the NrdR family. Requires Zn(2+) as cofactor.

Functionally, negatively regulates transcription of bacterial ribonucleotide reductase nrd genes and operons by binding to NrdR-boxes. The chain is Transcriptional repressor NrdR from Paracoccus denitrificans (strain Pd 1222).